We begin with the raw amino-acid sequence, 365 residues long: Protein RecA (365 aa).

73 to 80 (GPESSGKT) provides a ligand contact to ATP.

This sequence belongs to the RecA family.

The protein localises to the cytoplasm. Its function is as follows. Can catalyze the hydrolysis of ATP in the presence of single-stranded DNA, the ATP-dependent uptake of single-stranded DNA by duplex DNA, and the ATP-dependent hybridization of homologous single-stranded DNAs. It interacts with LexA causing its activation and leading to its autocatalytic cleavage. The sequence is that of Protein RecA from Prochlorococcus marinus (strain AS9601).